The primary structure comprises 365 residues: 3-methyl-L-tyrosine peroxygenase (365 aa).

313–317 (HIGVC) lines the heme pocket.

It depends on heme as a cofactor.

It catalyses the reaction 3-methyl-L-tyrosine + H2O2 = 5-hydroxy-3-methyl-L-tyrosine + H2O. It functions in the pathway antibiotic biosynthesis. Functionally, heme-containing peroxygenase that mediates the hydroxylation of 3-methyl-L-tyrosine (3-Me-Tyr) into 3-hydroxy-5-methyl-L-tyrosine (3-OH-5-Me-Tyr) in biosynthesis of saframycin A, a potent antitumor antibiotic that belongs to the tetrahydroisoquinoline family. Involved in biosynthesis of 3-hydroxy-5-methyl-O-methyltyrosine (3-OH-5-Me-OMe-Tyr), a core structure of saframycin A. This Streptomyces lavendulae protein is 3-methyl-L-tyrosine peroxygenase.